The sequence spans 292 residues: Homoserine kinase (292 aa).

R81–A91 lines the ATP pocket.

It belongs to the GHMP kinase family. Homoserine kinase subfamily.

Its subcellular location is the cytoplasm. The catalysed reaction is L-homoserine + ATP = O-phospho-L-homoserine + ADP + H(+). It participates in amino-acid biosynthesis; L-threonine biosynthesis; L-threonine from L-aspartate: step 4/5. Functionally, catalyzes the ATP-dependent phosphorylation of L-homoserine to L-homoserine phosphate. The sequence is that of Homoserine kinase from Thermococcus kodakarensis (strain ATCC BAA-918 / JCM 12380 / KOD1) (Pyrococcus kodakaraensis (strain KOD1)).